We begin with the raw amino-acid sequence, 398 residues long: Dual-specificity RNA methyltransferase RlmN (398 aa).

The Proton acceptor role is filled by glutamate 119. Residues 125–364 (DGDRATLCVS…TIVRKTRGDD (240 aa)) form the Radical SAM core domain. A disulfide bond links cysteine 132 and cysteine 369. Positions 139, 143, and 146 each coordinate [4Fe-4S] cluster. S-adenosyl-L-methionine-binding positions include 193-194 (GE), serine 225, 247-249 (SLH), and asparagine 326. Residue cysteine 369 is the S-methylcysteine intermediate of the active site.

This sequence belongs to the radical SAM superfamily. RlmN family. [4Fe-4S] cluster serves as cofactor.

The protein localises to the cytoplasm. The catalysed reaction is adenosine(2503) in 23S rRNA + 2 reduced [2Fe-2S]-[ferredoxin] + 2 S-adenosyl-L-methionine = 2-methyladenosine(2503) in 23S rRNA + 5'-deoxyadenosine + L-methionine + 2 oxidized [2Fe-2S]-[ferredoxin] + S-adenosyl-L-homocysteine. It catalyses the reaction adenosine(37) in tRNA + 2 reduced [2Fe-2S]-[ferredoxin] + 2 S-adenosyl-L-methionine = 2-methyladenosine(37) in tRNA + 5'-deoxyadenosine + L-methionine + 2 oxidized [2Fe-2S]-[ferredoxin] + S-adenosyl-L-homocysteine. In terms of biological role, specifically methylates position 2 of adenine 2503 in 23S rRNA and position 2 of adenine 37 in tRNAs. m2A2503 modification seems to play a crucial role in the proofreading step occurring at the peptidyl transferase center and thus would serve to optimize ribosomal fidelity. The protein is Dual-specificity RNA methyltransferase RlmN of Serratia proteamaculans (strain 568).